Consider the following 140-residue polypeptide: Nucleoside diphosphate kinase (140 aa).

The ATP site is built by Lys9, Phe57, Arg85, Thr91, Arg102, and Asn112. Residue His115 is the Pros-phosphohistidine intermediate of the active site.

The protein belongs to the NDK family. In terms of assembly, homotetramer. Requires Mg(2+) as cofactor.

Its subcellular location is the cytoplasm. It catalyses the reaction a 2'-deoxyribonucleoside 5'-diphosphate + ATP = a 2'-deoxyribonucleoside 5'-triphosphate + ADP. The catalysed reaction is a ribonucleoside 5'-diphosphate + ATP = a ribonucleoside 5'-triphosphate + ADP. Its function is as follows. Major role in the synthesis of nucleoside triphosphates other than ATP. The ATP gamma phosphate is transferred to the NDP beta phosphate via a ping-pong mechanism, using a phosphorylated active-site intermediate. In Chlorobaculum parvum (strain DSM 263 / NCIMB 8327) (Chlorobium vibrioforme subsp. thiosulfatophilum), this protein is Nucleoside diphosphate kinase.